The following is a 252-amino-acid chain: Geranylgeranylglyceryl phosphate synthase (252 aa).

Residues Asp-22 and Ser-51 each coordinate Mg(2+). Sn-glycerol 1-phosphate contacts are provided by residues Tyr-170–Gly-176, Gly-201–Gly-202, and Gly-223–Ser-224.

Belongs to the GGGP/HepGP synthase family. Group II subfamily. The cofactor is Mg(2+).

The protein resides in the cytoplasm. The catalysed reaction is sn-glycerol 1-phosphate + (2E,6E,10E)-geranylgeranyl diphosphate = sn-3-O-(geranylgeranyl)glycerol 1-phosphate + diphosphate. It participates in membrane lipid metabolism; glycerophospholipid metabolism. In terms of biological role, prenyltransferase that catalyzes the transfer of the geranylgeranyl moiety of geranylgeranyl diphosphate (GGPP) to the C3 hydroxyl of sn-glycerol-1-phosphate (G1P). This reaction is the first ether-bond-formation step in the biosynthesis of archaeal membrane lipids. The sequence is that of Geranylgeranylglyceryl phosphate synthase from Thermoplasma volcanium (strain ATCC 51530 / DSM 4299 / JCM 9571 / NBRC 15438 / GSS1).